A 450-amino-acid polypeptide reads, in one-letter code: UDP-N-acetylmuramoylalanine--D-glutamate ligase (450 aa).

119 to 125 (GSNGKTT) is a binding site for ATP.

Belongs to the MurCDEF family.

It localises to the cytoplasm. It carries out the reaction UDP-N-acetyl-alpha-D-muramoyl-L-alanine + D-glutamate + ATP = UDP-N-acetyl-alpha-D-muramoyl-L-alanyl-D-glutamate + ADP + phosphate + H(+). It functions in the pathway cell wall biogenesis; peptidoglycan biosynthesis. Cell wall formation. Catalyzes the addition of glutamate to the nucleotide precursor UDP-N-acetylmuramoyl-L-alanine (UMA). In Streptococcus pneumoniae (strain ATCC 700669 / Spain 23F-1), this protein is UDP-N-acetylmuramoylalanine--D-glutamate ligase.